Here is a 231-residue protein sequence, read N- to C-terminus: Small ribosomal subunit protein uS3c (231 aa).

The KH type-2 domain maps to 39–123 (LRNFIKKKYI…HLRLSVKPLR (85 aa)).

Belongs to the universal ribosomal protein uS3 family. Part of the 30S ribosomal subunit.

It localises to the plastid. Its subcellular location is the chloroplast. The polypeptide is Small ribosomal subunit protein uS3c (rps3) (Chlorella vulgaris (Green alga)).